The sequence spans 123 residues: WAP four-disulfide core domain protein 5 (123 aa).

The signal sequence occupies residues 1–24; the sequence is MRFGRLLLLAVLLAGVSQLPAVSG. 2 consecutive WAP domains span residues 27 to 74 and 75 to 121; these read KGEK…IPRV and SVKL…RDPV. Disulfide bonds link Cys-34-Cys-62, Cys-41-Cys-66, Cys-49-Cys-61, Cys-55-Cys-70, Cys-81-Cys-109, Cys-88-Cys-113, Cys-96-Cys-108, and Cys-102-Cys-117.

The protein resides in the secreted. In terms of biological role, putative acid-stable proteinase inhibitor. The polypeptide is WAP four-disulfide core domain protein 5 (WFDC5) (Otolemur garnettii (Small-eared galago)).